The sequence spans 363 residues: MTVTGIIAEFNPFHNGHKYLLDHAEGIKIVAMSGNFVQRGEPAIVDKWIRAQMALENGADLVVELPFFTAVQSADYFASGAVDILSRLGIDSLTFGTEEVLDYQTIADVYSEKSEEMEAFVESLPSDLSYPQKTQKMWEKFAGVDFTGNTPNHILGLAYAKACAGKGITLNPIQRQGAGYHSLDKEVSFASATSLRLHKEDSNFVDKFMPNSKLFQTSPQVSWDNYFQLLVYQILTNPDLTSVFQVNEEIASRLKAAVREISSVEELVDKVATKRYTKARVRRILTYILVGAVDNSLPKSIHVLGFSQKGQFHLKSVKKSVDIVARIGRKPWDMLTQQADNVYQLGNPELCEQNFGRVPIRVK.

ATP contacts are provided by residues I7–L20, G96, N152, and R175.

The protein belongs to the TmcAL family.

It is found in the cytoplasm. It catalyses the reaction cytidine(34) in elongator tRNA(Met) + acetate + ATP = N(4)-acetylcytidine(34) in elongator tRNA(Met) + AMP + diphosphate. In terms of biological role, catalyzes the formation of N(4)-acetylcytidine (ac(4)C) at the wobble position of elongator tRNA(Met), using acetate and ATP as substrates. First activates an acetate ion to form acetyladenylate (Ac-AMP) and then transfers the acetyl group to tRNA to form ac(4)C34. This Streptococcus thermophilus (strain ATCC BAA-250 / LMG 18311) protein is tRNA(Met) cytidine acetate ligase.